The following is a 619-amino-acid chain: Dihydroxy-acid dehydratase (619 aa).

D81 contributes to the Mg(2+) binding site. Position 122 (C122) interacts with [2Fe-2S] cluster. D123 and K124 together coordinate Mg(2+). K124 carries the post-translational modification N6-carboxylysine. C198 contributes to the [2Fe-2S] cluster binding site. E494 is a binding site for Mg(2+). S520 serves as the catalytic Proton acceptor.

It belongs to the IlvD/Edd family. In terms of assembly, homodimer. [2Fe-2S] cluster is required as a cofactor. It depends on Mg(2+) as a cofactor.

The enzyme catalyses (2R)-2,3-dihydroxy-3-methylbutanoate = 3-methyl-2-oxobutanoate + H2O. The catalysed reaction is (2R,3R)-2,3-dihydroxy-3-methylpentanoate = (S)-3-methyl-2-oxopentanoate + H2O. The protein operates within amino-acid biosynthesis; L-isoleucine biosynthesis; L-isoleucine from 2-oxobutanoate: step 3/4. It functions in the pathway amino-acid biosynthesis; L-valine biosynthesis; L-valine from pyruvate: step 3/4. Functionally, functions in the biosynthesis of branched-chain amino acids. Catalyzes the dehydration of (2R,3R)-2,3-dihydroxy-3-methylpentanoate (2,3-dihydroxy-3-methylvalerate) into 2-oxo-3-methylpentanoate (2-oxo-3-methylvalerate) and of (2R)-2,3-dihydroxy-3-methylbutanoate (2,3-dihydroxyisovalerate) into 2-oxo-3-methylbutanoate (2-oxoisovalerate), the penultimate precursor to L-isoleucine and L-valine, respectively. The polypeptide is Dihydroxy-acid dehydratase (Neisseria meningitidis serogroup C / serotype 2a (strain ATCC 700532 / DSM 15464 / FAM18)).